A 56-amino-acid chain; its full sequence is Large ribosomal subunit protein eL24 (56 aa).

Zn(2+)-binding residues include cysteine 6, cysteine 9, cysteine 32, and cysteine 36. The C4-type zinc-finger motif lies at 6 to 36; that stretch reads CSFCNTRITPGTGKLYAKKDGTVYYFCSSKC.

It belongs to the eukaryotic ribosomal protein eL24 family. In terms of assembly, part of the 50S ribosomal subunit. Forms a cluster with proteins L3 and L14. Zn(2+) serves as cofactor.

Its function is as follows. Binds to the 23S rRNA. This chain is Large ribosomal subunit protein eL24, found in Methanothrix thermoacetophila (strain DSM 6194 / JCM 14653 / NBRC 101360 / PT) (Methanosaeta thermophila).